A 365-amino-acid chain; its full sequence is 1-deoxy-D-xylulose 5-phosphate reductoisomerase (365 aa).

Residues T7, G8, S9, I10, A31, K32, N33, and N114 each contribute to the NADPH site. K115 is a binding site for 1-deoxy-D-xylulose 5-phosphate. E116 is an NADPH binding site. Residue D134 coordinates Mn(2+). 1-deoxy-D-xylulose 5-phosphate-binding residues include S135, E136, S158, and H181. E136 is a binding site for Mn(2+). Residue G187 participates in NADPH binding. Residues S194, N199, K200, and E203 each coordinate 1-deoxy-D-xylulose 5-phosphate. E203 is a binding site for Mn(2+).

The protein belongs to the DXR family. It depends on Mg(2+) as a cofactor. Mn(2+) serves as cofactor.

The catalysed reaction is 2-C-methyl-D-erythritol 4-phosphate + NADP(+) = 1-deoxy-D-xylulose 5-phosphate + NADPH + H(+). The protein operates within isoprenoid biosynthesis; isopentenyl diphosphate biosynthesis via DXP pathway; isopentenyl diphosphate from 1-deoxy-D-xylulose 5-phosphate: step 1/6. Functionally, catalyzes the NADPH-dependent rearrangement and reduction of 1-deoxy-D-xylulose-5-phosphate (DXP) to 2-C-methyl-D-erythritol 4-phosphate (MEP). In Campylobacter curvus (strain 525.92), this protein is 1-deoxy-D-xylulose 5-phosphate reductoisomerase.